The sequence spans 131 residues: MKKHGVLNSEIASILASLGHTDTIVIADCGLPIPDGVKRIDLAVEIGKPSFLDVLQVVADDMAIEKVTLAEEVINNNAEINKEIELKLVEPALEYVSHEQFKEHTKKAKAIIRTGEATPYANVILHAGVIF.

His20 (proton donor) is an active-site residue. Substrate-binding positions include Asp28, His98, and 120–122 (YAN).

This sequence belongs to the RbsD / FucU family. RbsD subfamily. As to quaternary structure, homodecamer.

Its subcellular location is the cytoplasm. It catalyses the reaction beta-D-ribopyranose = beta-D-ribofuranose. It participates in carbohydrate metabolism; D-ribose degradation; D-ribose 5-phosphate from beta-D-ribopyranose: step 1/2. In terms of biological role, catalyzes the interconversion of beta-pyran and beta-furan forms of D-ribose. The sequence is that of D-ribose pyranase from Bacillus cereus (strain ATCC 10987 / NRS 248).